A 459-amino-acid chain; its full sequence is ATP synthase subunit beta 1 (459 aa).

148–155 (GGAGVGKT) is an ATP binding site.

It belongs to the ATPase alpha/beta chains family. In terms of assembly, F-type ATPases have 2 components, CF(1) - the catalytic core - and CF(0) - the membrane proton channel. CF(1) has five subunits: alpha(3), beta(3), gamma(1), delta(1), epsilon(1). CF(0) has three main subunits: a(1), b(2) and c(9-12). The alpha and beta chains form an alternating ring which encloses part of the gamma chain. CF(1) is attached to CF(0) by a central stalk formed by the gamma and epsilon chains, while a peripheral stalk is formed by the delta and b chains.

The protein localises to the cell inner membrane. It catalyses the reaction ATP + H2O + 4 H(+)(in) = ADP + phosphate + 5 H(+)(out). Its function is as follows. Produces ATP from ADP in the presence of a proton gradient across the membrane. The catalytic sites are hosted primarily by the beta subunits. This Nitrosospira multiformis (strain ATCC 25196 / NCIMB 11849 / C 71) protein is ATP synthase subunit beta 1.